A 366-amino-acid polypeptide reads, in one-letter code: MAIISSKKQPPEPNGQPNKRPESAPSVPKEKVLQPEAAIDEQGKQEESIRPQRFADYIGQKDLKDVLDIAIKAAKSRGEVLDHLLLYGPPGLGKTTMAMILASEMGVNYKITSAPALERPRDIVGLLVNLKPGDILFIDEIHRLSRMTEEILYPAMEDYRLDITVGKGSSARIRSIPLSKFTLVGATTRVGALTSPLRDRFGLIQKLRFYEVDELSQIVLRSAQLLQTQVTDDGATEIARRSRGTPRIANRLLKRVRDYAQVKSCAEVSQNIAAEALQLFQVDPCGLDWTDRRMLSVIIEQFNGGPVGLETIAAATGEDTQTIEEVYEPYLMQIGYLSRTPRGRTATKAAYKHMGFTPPNEQLSLL.

The disordered stretch occupies residues 1 to 49 (MAIISSKKQPPEPNGQPNKRPESAPSVPKEKVLQPEAAIDEQGKQEESI). A large ATPase domain (RuvB-L) region spans residues 13–210 (PNGQPNKRPE…FGLIQKLRFY (198 aa)). ATP-binding positions include isoleucine 49, arginine 50, glycine 91, lysine 94, threonine 95, threonine 96, 157–159 (EDY), arginine 200, tyrosine 210, and arginine 247. Threonine 95 is a binding site for Mg(2+). Positions 211–281 (EVDELSQIVL…IAAEALQLFQ (71 aa)) are small ATPAse domain (RuvB-S). The head domain (RuvB-H) stretch occupies residues 284–366 (PCGLDWTDRR…TPPNEQLSLL (83 aa)). Positions 339 and 344 each coordinate DNA.

The protein belongs to the RuvB family. In terms of assembly, homohexamer. Forms an RuvA(8)-RuvB(12)-Holliday junction (HJ) complex. HJ DNA is sandwiched between 2 RuvA tetramers; dsDNA enters through RuvA and exits via RuvB. An RuvB hexamer assembles on each DNA strand where it exits the tetramer. Each RuvB hexamer is contacted by two RuvA subunits (via domain III) on 2 adjacent RuvB subunits; this complex drives branch migration. In the full resolvosome a probable DNA-RuvA(4)-RuvB(12)-RuvC(2) complex forms which resolves the HJ.

It localises to the cytoplasm. The catalysed reaction is ATP + H2O = ADP + phosphate + H(+). In terms of biological role, the RuvA-RuvB-RuvC complex processes Holliday junction (HJ) DNA during genetic recombination and DNA repair, while the RuvA-RuvB complex plays an important role in the rescue of blocked DNA replication forks via replication fork reversal (RFR). RuvA specifically binds to HJ cruciform DNA, conferring on it an open structure. The RuvB hexamer acts as an ATP-dependent pump, pulling dsDNA into and through the RuvAB complex. RuvB forms 2 homohexamers on either side of HJ DNA bound by 1 or 2 RuvA tetramers; 4 subunits per hexamer contact DNA at a time. Coordinated motions by a converter formed by DNA-disengaged RuvB subunits stimulates ATP hydrolysis and nucleotide exchange. Immobilization of the converter enables RuvB to convert the ATP-contained energy into a lever motion, pulling 2 nucleotides of DNA out of the RuvA tetramer per ATP hydrolyzed, thus driving DNA branch migration. The RuvB motors rotate together with the DNA substrate, which together with the progressing nucleotide cycle form the mechanistic basis for DNA recombination by continuous HJ branch migration. Branch migration allows RuvC to scan DNA until it finds its consensus sequence, where it cleaves and resolves cruciform DNA. This chain is Holliday junction branch migration complex subunit RuvB, found in Nostoc sp. (strain PCC 7120 / SAG 25.82 / UTEX 2576).